A 258-amino-acid polypeptide reads, in one-letter code: UPF0246 protein YaaA (258 aa).

It belongs to the UPF0246 family.

The sequence is that of UPF0246 protein YaaA from Escherichia coli (strain SE11).